Reading from the N-terminus, the 178-residue chain is Large ribosomal subunit protein uL5 (178 aa).

At A2 the chain carries N-acetylalanine. Residue K38 forms a Glycyl lysine isopeptide (Lys-Gly) (interchain with G-Cter in SUMO2) linkage. T44 and T47 each carry phosphothreonine. K52 bears the N6-acetyllysine; alternate mark. Residue K52 forms a Glycyl lysine isopeptide (Lys-Gly) (interchain with G-Cter in SUMO2); alternate linkage. Position 85 is an N6-acetyllysine (K85). K154 is covalently cross-linked (Glycyl lysine isopeptide (Lys-Gly) (interchain with G-Cter in SUMO2)).

Belongs to the universal ribosomal protein uL5 family. As to quaternary structure, component of the large ribosomal subunit (LSU). Part of the 5S RNP complex, which is a LSU subcomplex composed of the 5S RNA, RPL5 and RPL11. Component of a hexameric 5S RNP precursor complex, composed of 5S RNA, RRS1, RPF2/BXDC1, RPL5, RPL11 and HEATR3; this complex acts as a precursor for ribosome assembly. Interacts with PML. Interacts with MDM2 (via its RanBP2-type zinc finger domain); negatively regulates MDM2-mediated TP53 ubiquitination and degradation. Interacts with NOP53; retains RPL11 into the nucleolus.

Its subcellular location is the nucleus. It is found in the nucleolus. The protein localises to the cytoplasm. Functionally, component of the ribosome, a large ribonucleoprotein complex responsible for the synthesis of proteins in the cell. The small ribosomal subunit (SSU) binds messenger RNAs (mRNAs) and translates the encoded message by selecting cognate aminoacyl-transfer RNA (tRNA) molecules. The large subunit (LSU) contains the ribosomal catalytic site termed the peptidyl transferase center (PTC), which catalyzes the formation of peptide bonds, thereby polymerizing the amino acids delivered by tRNAs into a polypeptide chain. The nascent polypeptides leave the ribosome through a tunnel in the LSU and interact with protein factors that function in enzymatic processing, targeting, and the membrane insertion of nascent chains at the exit of the ribosomal tunnel. As part of the 5S RNP/5S ribonucleoprotein particle it is an essential component of the LSU, required for its formation and the maturation of rRNAs. It also couples ribosome biogenesis to p53/TP53 activation. As part of the 5S RNP it accumulates in the nucleoplasm and inhibits MDM2, when ribosome biogenesis is perturbed, mediating the stabilization and the activation of TP53. Promotes nucleolar location of PML. This chain is Large ribosomal subunit protein uL5 (RPL11), found in Oryctolagus cuniculus (Rabbit).